A 263-amino-acid polypeptide reads, in one-letter code: Bradykinin-potentiating and C-type natriuretic peptides (263 aa).

Residues 1–23 (MFVSRLAASGLLLLALMALSLDG) form the signal peptide. A propeptide spanning residues 24–30 (KPVQQWS) is cleaved from the precursor. Gln-31 carries the pyrrolidone carboxylic acid modification. Residues 42-48 (LVVQQWS) constitute a propeptide that is removed on maturation. Gln-49 bears the Pyrrolidone carboxylic acid mark. Residues 60 to 66 (LVVQQWS) constitute a propeptide that is removed on maturation. Pyrrolidone carboxylic acid is present on Gln-67. The propeptide occupies 78 to 84 (LVVQQWS). Gln-85 bears the Pyrrolidone carboxylic acid mark. Residues 89 to 95 (PRPKIPP) are angiotensin-converting enzyme active site binding. The propeptide occupies 96–102 (LVVQQWS). Position 103 is a pyrrolidone carboxylic acid (Gln-103). The angiotensin-converting enzyme active site binding stretch occupies residues 107–113 (PRPKIPP). The propeptide occupies 114 to 116 (LVV). Position 117 is a pyrrolidone carboxylic acid (Gln-117). The propeptide occupies 128 to 130 (LLL). Position 131 is a pyrrolidone carboxylic acid (Gln-131). A propeptide spanning residues 137 to 241 (AGGTTALREE…ARRLKGLVKK (105 aa)) is cleaved from the precursor. 2 disordered regions span residues 152–171 (EAAS…GSKA) and 177–205 (RLSK…GKQA). A compositionally biased stretch (low complexity) spans 181-192 (SKGASATSASAS). The segment covering 194-204 (PMRDLRTDGKQ) has biased composition (basic and acidic residues). An intrachain disulfide couples Cys-247 to Cys-263.

It in the N-terminal section; belongs to the bradykinin-potentiating peptide family. This sequence in the C-terminal section; belongs to the natriuretic peptide family. Expressed by the venom gland.

Its subcellular location is the secreted. Its function is as follows. Inhibits the rabbit lung angiotensin-converting enzyme (ACE) (IC(50)=15 uM). Contracts the rat gastric fundus smooth muscle in a rapid and transient manner. Functionally, causes no contraction of the rat gastric fundus smooth muscle even at high concentrations. Causes very weak contraction of the isolated guinea pig ileum. Causes weak contraction on rat uterus. Inhibits the activity of the angiotensin-converting enzyme (ACE) by a preferential interaction with its C-domain (Ki=30 nM, IC(50)=1.1 uM). It binds ACE in a zinc-independent manner. Also potentiates the hypotensive effects of bradykinin. Causes high contraction of the isolated guinea pig ileum and weak contraction on rat uterus. In terms of biological role, inhibits the activity of the angiotensin-converting enzyme (ACE) by interacting with the same potency to its C- and N-domains. Inhibits the rabbit lung angiotensin-converting enzyme (ACE) (IC(50)=7.1 uM). Causes weak contraction of the isolated guinea pig ileum. Causes weak contraction on rat uterus. Its function is as follows. Inhibits the rabbit lung angiotensin-converting enzyme (ACE) (IC(50)=46 uM). Synthetic Leu3-blomhotin contracts the rat gastric fundus smooth muscle in a rapid and transient manner. Causes moderate contraction of the isolated guinea pig ileum. Causes weak contraction on rat uterus. Functionally, causes weak contraction of the isolated guinea pig ileum. Causes about 50-fold more potentiating activity on rat uterus than on guinea pig ileum. Synthetic peptide potentiates the bradykinin in vivo. In terms of biological role, synthetic peptide does not show any bradykinin-potentiating effects. Its function is as follows. has a vasorelaxant activity in rat aortic strips and a diuretic potency in anesthetized rats. May act by activating natriuretic receptors (NPR1 and/or NPR2). The protein is Bradykinin-potentiating and C-type natriuretic peptides of Gloydius blomhoffii (Mamushi).